The following is a 585-amino-acid chain: Arginine--tRNA ligase (585 aa).

The 'HIGH' region motif lies at 131–141 (ANPTGPMHVGH).

Belongs to the class-I aminoacyl-tRNA synthetase family. In terms of assembly, monomer.

The protein resides in the cytoplasm. It carries out the reaction tRNA(Arg) + L-arginine + ATP = L-arginyl-tRNA(Arg) + AMP + diphosphate. The sequence is that of Arginine--tRNA ligase from Chelativorans sp. (strain BNC1).